The primary structure comprises 143 residues: Flagellar assembly factor FliW (143 aa).

The protein belongs to the FliW family. As to quaternary structure, interacts with translational regulator CsrA and flagellin(s).

It is found in the cytoplasm. In terms of biological role, acts as an anti-CsrA protein, binds CsrA and prevents it from repressing translation of its target genes, one of which is flagellin. Binds to flagellin and participates in the assembly of the flagellum. In Clostridium botulinum (strain ATCC 19397 / Type A), this protein is Flagellar assembly factor FliW.